Here is a 291-residue protein sequence, read N- to C-terminus: 33 kDa chaperonin (291 aa).

2 disulfide bridges follow: Cys-237–Cys-239 and Cys-270–Cys-273.

Belongs to the HSP33 family. Post-translationally, under oxidizing conditions two disulfide bonds are formed involving the reactive cysteines. Under reducing conditions zinc is bound to the reactive cysteines and the protein is inactive.

It is found in the cytoplasm. Redox regulated molecular chaperone. Protects both thermally unfolding and oxidatively damaged proteins from irreversible aggregation. Plays an important role in the bacterial defense system toward oxidative stress. In Halalkalibacterium halodurans (strain ATCC BAA-125 / DSM 18197 / FERM 7344 / JCM 9153 / C-125) (Bacillus halodurans), this protein is 33 kDa chaperonin.